The following is a 461-amino-acid chain: Arginine biosynthesis bifunctional protein ArgJ, chloroplastic (461 aa).

Substrate is bound by residues threonine 202, lysine 228, threonine 239, glutamate 326, asparagine 456, and threonine 461. Threonine 239 acts as the Nucleophile in catalysis.

Belongs to the ArgJ family. As to quaternary structure, heterodimer of an alpha and a beta chain.

Its subcellular location is the plastid. The protein resides in the chloroplast. It catalyses the reaction N(2)-acetyl-L-ornithine + L-glutamate = N-acetyl-L-glutamate + L-ornithine. The enzyme catalyses L-glutamate + acetyl-CoA = N-acetyl-L-glutamate + CoA + H(+). It functions in the pathway amino-acid biosynthesis; L-arginine biosynthesis; L-ornithine and N-acetyl-L-glutamate from L-glutamate and N(2)-acetyl-L-ornithine (cyclic): step 1/1. The protein operates within amino-acid biosynthesis; L-arginine biosynthesis; N(2)-acetyl-L-ornithine from L-glutamate: step 1/4. In terms of biological role, catalyzes two activities which are involved in the cyclic version of arginine biosynthesis: the synthesis of acetylglutamate from glutamate and acetyl-CoA, and of ornithine by transacetylation between acetylornithine and glutamate. The polypeptide is Arginine biosynthesis bifunctional protein ArgJ, chloroplastic (Ostreococcus lucimarinus (strain CCE9901)).